The sequence spans 343 residues: MKIKALSKLKPEQGIWMNEVDMPELGHNDLLIKIKKTAICGTDVHIYNWDEWSQKTIPVPMVVGHEYVGEVVGIGQEVRGFQIGDRVSGEGHITCGHCRNCRGGRTHLCRNTIGVGVNRTGCFSEYLVIPAFNAFKIPDGISDDLASIFDPFGNAVHTALSFDLVGEDVLITGAGPIGIMAAAVAKHVGARHVVITDVNEYRLDLARKMGVTRAVNVAEQNLEDVMKELGMTEGFDVGLEMSGVPSAFSAMLKTMNHGGRIALLGIPPSSMAIDWNQVIFKGLVIKGIYGREMFETWYKMASLIQSGLDISPIITHHFKVDDFQKGFDIMRSGASGKVILDWQ.

Zn(2+) is bound at residue C40. Residues T42 and H45 each act as charge relay system in the active site. Residues H65, E66, C95, C98, C101, and C109 each contribute to the Zn(2+) site. NAD(+) is bound by residues I177, D197, R202, 264 to 266, and 288 to 289; these read LGI and IY.

The protein belongs to the zinc-containing alcohol dehydrogenase family. As to quaternary structure, homotetramer. Zn(2+) serves as cofactor.

The protein localises to the cytoplasm. It carries out the reaction L-threonine + NAD(+) = (2S)-2-amino-3-oxobutanoate + NADH + H(+). It participates in amino-acid degradation; L-threonine degradation via oxydo-reductase pathway; glycine from L-threonine: step 1/2. Catalyzes the NAD(+)-dependent oxidation of L-threonine to 2-amino-3-ketobutyrate. The sequence is that of L-threonine 3-dehydrogenase from Vibrio cholerae serotype O1 (strain ATCC 39541 / Classical Ogawa 395 / O395).